We begin with the raw amino-acid sequence, 216 residues long: Probable GTP-binding protein EngB (216 aa).

The EngB-type G domain occupies Glu-26–Pro-200. GTP is bound by residues Gly-34–Ser-41, Gly-61–Leu-65, Asp-79–Gly-82, Thr-146–Asp-149, and Tyr-179–Ser-181. Residues Ser-41 and Thr-63 each coordinate Mg(2+).

The protein belongs to the TRAFAC class TrmE-Era-EngA-EngB-Septin-like GTPase superfamily. EngB GTPase family. The cofactor is Mg(2+).

Its function is as follows. Necessary for normal cell division and for the maintenance of normal septation. This chain is Probable GTP-binding protein EngB, found in Vibrio vulnificus (strain YJ016).